We begin with the raw amino-acid sequence, 848 residues long: Glutenin, high molecular weight subunit DX5 (848 aa).

An N-terminal signal peptide occupies residues 1–21; sequence MAKRLVLFVAVVVALVALTVA. The disordered stretch occupies residues 124–804; it reads YYPGQASPQR…GQQSGQGQQG (681 aa). Composition is skewed to low complexity over residues 126–137, 145–166, 173–203, 210–240, 263–303, 310–351, 359–411, 419–468, 476–527, 544–659, 670–687, 709–727, and 739–795; these read PGQASPQRPGQG, QGYY…QGQP, PQQS…GQPG, QLQP…PGQG, QGQQ…GQSG, QQPG…PGQG, PGYY…PGQG, QGQQ…YPTS, QQPG…QGQP, GQGQ…GQPG, QQPG…GQGQ, and GQGQ…TGQG.

This sequence belongs to the gliadin/glutenin family. Disulfide-bridge linked aggregates.

Glutenins are high-molecular weight seed storage proteins of wheat endosperm. Thought to be responsible for the visco-elastic property of wheat dough. This chain is Glutenin, high molecular weight subunit DX5 (GLU-1D-1D), found in Triticum aestivum (Wheat).